The following is a 497-amino-acid chain: Gasdermin-E (497 aa).

The membrane targeting domain stretch occupies residues 1–56 (MFAKATRSFLREVDAEGDLIAVSNLNDSDKSQLLSLVTKKKRFWCWQRPKYQFLSV). S-(2-succinyl)cysteine is present on C45. A Glycyl lysine isopeptide (Lys-Gly) (interchain with G-Cter in ubiquitin) cross-link involves residue K120. S-(2-succinyl)cysteine is present on residues C156, C168, and C180. K189 is covalently cross-linked (Glycyl lysine isopeptide (Lys-Gly) (interchain with G-Cter in ubiquitin)). An S-(2-succinyl)cysteine mark is found at C235, C371, C409, C418, and C491.

Belongs to the gasdermin family. Homooligomer; homooligomeric ring-shaped pore complex containing 27-28 subunits when inserted in the membrane. In terms of processing, cleavage at Asp-270 by CASP3 (mature and uncleaved precursor forms) or granzyme B (GZMB) relieves autoinhibition and is sufficient to initiate pyroptosis. Post-translationally, succination by the Krebs cycle intermediate fumarate, which leads to S-(2-succinyl)cysteine residues, inhibits processing by caspases, and ability to initiate pyroptosis. Succination modification is catalyzed by a non-enzymatic reaction caused by an accumulation of fumarate. Ubiquitinated on Lys-120 and Lys-189 via 'Lys-48'-linked polyubiquitin chains, leading to proteasomal degradation. Deubiquitinated by USP48, leading to increased stability. In terms of processing, palmitoylated.

Its subcellular location is the cell membrane. It localises to the cytoplasm. The protein resides in the cytosol. Its activity is regulated as follows. The full-length protein before cleavage is inactive: intramolecular interactions between N- and C-terminal domains mediate autoinhibition in the absence of activation signal. The intrinsic pyroptosis-inducing activity is carried by the released N-terminal moiety (Gasdermin-E, N-terminal) following cleavage by CASP3 or granzyme B (GZMB). Activated by NLRP1 in the absence of GSDMD expression: NLRP1 cleaves and activates CASP8, promoting downstream activation of CASP3 and subsequent activation of GSDME. Its function is as follows. Precursor of a pore-forming protein that converts non-inflammatory apoptosis to pyroptosis. This form constitutes the precursor of the pore-forming protein: upon cleavage, the released N-terminal moiety (Gasdermin-E, N-terminal) binds to membranes and forms pores, triggering pyroptosis. Functionally, pore-forming protein produced by cleavage by CASP3 or granzyme B (GZMB), which converts non-inflammatory apoptosis to pyroptosis or promotes granzyme-mediated pyroptosis, respectively. After cleavage, moves to the plasma membrane, homooligomerizes within the membrane and forms pores of 10-15 nanometers (nm) of inner diameter, allowing the release of mature interleukins (IL1B and IL16) and triggering pyroptosis. Binds to inner leaflet lipids, bisphosphorylated phosphatidylinositols, such as phosphatidylinositol (4,5)-bisphosphate. Cleavage by CASP3 switches CASP3-mediated apoptosis induced by TNF or danger signals, such as chemotherapy drugs, to pyroptosis. Mediates secondary necrosis downstream of the mitochondrial apoptotic pathway and CASP3 activation as well as in response to viral agents. Exhibits bactericidal activity. Cleavage by GZMB promotes tumor suppressor activity by triggering robust anti-tumor immunity. Suppresses tumors by mediating granzyme-mediated pyroptosis in target cells of natural killer (NK) cells: cleavage by granzyme B (GZMB), delivered to target cells from NK-cells, triggers pyroptosis of tumor cells and tumor suppression. May play a role in the p53/TP53-regulated cellular response to DNA damage. The polypeptide is Gasdermin-E (Equus caballus (Horse)).